Reading from the N-terminus, the 310-residue chain is UPF0324 membrane protein GSU2818 (310 aa).

9 helical membrane-spanning segments follow: residues 11–33, 53–72, 79–97, 107–129, 136–158, 193–215, 227–244, 254–273, and 286–308; these read FTILLALCATPWVGTAQALVMGI, MLLQASVVGLGFGLSLGEVI, IWYSVIGISCTLLVGYGLG, SALISFGTAICGGSAIAAMAPVL, TAVALATVFTLNSAALLLFPLVG, ALAIGTTVKLTRAIWIAPVVMAA, IPLFIIGFLGAAAIRTLL, LAGVAKQCLVVTLFLVGAGL, and LVQAVSLWVLVSALTLVALKLPW.

The protein belongs to the UPF0324 family.

It localises to the cell membrane. The protein is UPF0324 membrane protein GSU2818 of Geobacter sulfurreducens (strain ATCC 51573 / DSM 12127 / PCA).